The following is a 155-amino-acid chain: Ribosome maturation factor RimP (155 aa).

It belongs to the RimP family.

The protein localises to the cytoplasm. Functionally, required for maturation of 30S ribosomal subunits. The sequence is that of Ribosome maturation factor RimP from Prochlorococcus marinus (strain MIT 9301).